Reading from the N-terminus, the 439-residue chain is Microfibrillar-associated protein 1 (439 aa).

The span at 1 to 17 (MSVPSSLMKQPPIQSTA) shows a compositional bias: polar residues. A disordered region spans residues 1-200 (MSVPSSLMKQ…SEDEMEPRLK (200 aa)). Ser2 is subject to N-acetylserine. Basic and acidic residues predominate over residues 23–34 (RNEKGEISMEKV). 2 positions are modified to phosphoserine: Ser52 and Ser53. Basic and acidic residues predominate over residues 61–70 (QFIKKAKEQE). A Glycyl lysine isopeptide (Lys-Gly) (interchain with G-Cter in SUMO2) cross-link involves residue Lys67. The span at 71 to 81 (AEPEEQEEDSS) shows a compositional bias: acidic residues. Phosphoserine is present on residues Ser94, Ser116, Ser118, Ser132, and Ser133. Composition is skewed to acidic residues over residues 112–122 (VVGESDSEVEG) and 131–144 (DSSEEEEEEIDEEE). A compositionally biased stretch (basic and acidic residues) spans 145 to 163 (IERRRGMMRQRAQERKNEE). Positions 178-195 (ESESESEYEEYTDSEDEM) are enriched in acidic residues. Residue Lys249 forms a Glycyl lysine isopeptide (Lys-Gly) (interchain with G-Cter in SUMO2) linkage. Thr267 is subject to Phosphothreonine. Residue Lys357 forms a Glycyl lysine isopeptide (Lys-Gly) (interchain with G-Cter in SUMO2) linkage. A Phosphoserine modification is found at Ser361. Glycyl lysine isopeptide (Lys-Gly) (interchain with G-Cter in SUMO2) cross-links involve residues Lys371, Lys381, Lys415, and Lys418. Ser432 carries the post-translational modification Phosphoserine.

It belongs to the MFAP1 family. As to quaternary structure, component of the spliceosome B complex. Interacts with PRPF38A (via N-terminal interaction domain).

It localises to the nucleus. Involved in pre-mRNA splicing as a component of the spliceosome. The polypeptide is Microfibrillar-associated protein 1 (Bos taurus (Bovine)).